Reading from the N-terminus, the 458-residue chain is Pyruvate kinase (458 aa).

R33 provides a ligand contact to substrate. Positions 35, 37, and 67 each coordinate K(+). ATP is bound at residue 35 to 38 (NASH). ATP contacts are provided by R74 and K148. Mg(2+) is bound at residue E214. Substrate contacts are provided by G237, D238, and T270. Mg(2+) is bound at residue D238.

Belongs to the pyruvate kinase family. In terms of assembly, homotetramer. It depends on a divalent metal cation as a cofactor.

It catalyses the reaction pyruvate + ATP = phosphoenolpyruvate + ADP + H(+). It functions in the pathway carbohydrate degradation; glycolysis; pyruvate from D-glyceraldehyde 3-phosphate: step 5/5. Its activity is regulated as follows. Not activated by classical allosteric effectors. In Aeropyrum pernix (strain ATCC 700893 / DSM 11879 / JCM 9820 / NBRC 100138 / K1), this protein is Pyruvate kinase (pyk).